We begin with the raw amino-acid sequence, 156 residues long: MQWTAAFGSLARLVSRGDAFVTYVPPAPSIVDDIIAQVKFDANGLISALAQAPDGVVLMLAWMNADALRETLLTGRVCYWSRSRQKLWRKGETSGQQQKLIEARLDCDMDAVLMIVDQTGVACHTGRRSCFYHGVTPDGLRDTSQPEISAEELYGR.

Residue Asp-106 coordinates Mg(2+). Cys-107 lines the Zn(2+) pocket. Mg(2+)-binding residues include Asp-108 and Asp-110. Positions 123 and 130 each coordinate Zn(2+).

It belongs to the PRA-CH family. As to quaternary structure, homodimer. Mg(2+) is required as a cofactor. The cofactor is Zn(2+).

The protein localises to the cytoplasm. It carries out the reaction 1-(5-phospho-beta-D-ribosyl)-5'-AMP + H2O = 1-(5-phospho-beta-D-ribosyl)-5-[(5-phospho-beta-D-ribosylamino)methylideneamino]imidazole-4-carboxamide. Its pathway is amino-acid biosynthesis; L-histidine biosynthesis; L-histidine from 5-phospho-alpha-D-ribose 1-diphosphate: step 3/9. In terms of biological role, catalyzes the hydrolysis of the adenine ring of phosphoribosyl-AMP. In Gluconobacter oxydans (strain 621H) (Gluconobacter suboxydans), this protein is Phosphoribosyl-AMP cyclohydrolase.